Consider the following 498-residue polypeptide: Glycerol kinase (498 aa).

Threonine 12 is an ADP binding site. Residues threonine 12, threonine 13, and serine 14 each contribute to the ATP site. A sn-glycerol 3-phosphate-binding site is contributed by threonine 12. Arginine 16 lines the ADP pocket. 4 residues coordinate sn-glycerol 3-phosphate: arginine 82, glutamate 83, tyrosine 134, and aspartate 243. Glycerol is bound by residues arginine 82, glutamate 83, tyrosine 134, aspartate 243, and glutamine 244. Residues threonine 265 and glycine 308 each contribute to the ADP site. Residues threonine 265, glycine 308, glutamine 312, and glycine 409 each contribute to the ATP site. ADP-binding residues include glycine 409 and asparagine 413.

Belongs to the FGGY kinase family. In terms of assembly, homotetramer and homodimer (in equilibrium).

The enzyme catalyses glycerol + ATP = sn-glycerol 3-phosphate + ADP + H(+). It functions in the pathway polyol metabolism; glycerol degradation via glycerol kinase pathway; sn-glycerol 3-phosphate from glycerol: step 1/1. With respect to regulation, activated by phosphorylation and inhibited by fructose 1,6-bisphosphate (FBP). Its function is as follows. Key enzyme in the regulation of glycerol uptake and metabolism. Catalyzes the phosphorylation of glycerol to yield sn-glycerol 3-phosphate. The sequence is that of Glycerol kinase from Clostridium botulinum (strain Langeland / NCTC 10281 / Type F).